Consider the following 199-residue polypeptide: Large ribosomal subunit protein bL9 (199 aa).

Over residues 149–166 the composition is skewed to basic and acidic residues; the sequence is AEAERINRGEDINSRQED. The tract at residues 149–199 is disordered; the sequence is AEAERINRGEDINSRQEDQDAAAEAIAAAGEFFDPEAQDETPETEAASEQQ. Positions 181–191 are enriched in acidic residues; sequence FDPEAQDETPE.

The protein belongs to the bacterial ribosomal protein bL9 family.

Functionally, binds to the 23S rRNA. The chain is Large ribosomal subunit protein bL9 from Afipia carboxidovorans (strain ATCC 49405 / DSM 1227 / KCTC 32145 / OM5) (Oligotropha carboxidovorans).